The following is a 1369-amino-acid chain: MVLHSHQLTYAGIAFALCLHHLISAIEVPLDSNIQSELPQPPTITKQSVKDYIVDPRDNIFIECEAKGNPVPTFSWTRNGKFFNVAKDPKVSMRRRSGTLVIDFHGGGRPDDYEGEYQCFARNDYGTALSSKIHLQVSRSPLWPKEKVDVIEVDEGAPLSLQCNPPPGLPPPVIFWMSSSMEPIHQDKRVSQGQNGDLYFSNVMLQDAQTDYSCNARFHFTHTIQQKNPYTLKVKTKKPHNETSLRNHTDMYSARGVTETTPSFMYPYGTSSSQMVLRGVDLLLECIASGVPAPDIMWYKKGGELPAGKTKLENFNKALRISNVSEEDSGEYFCLASNKMGSIRHTISVRVKAAPYWLDEPQNLILAPGEDGRLVCRANGNPKPSIQWLVNGEPIEGSPPNPSREVAGDTIVFRDTQIGSSAVYQCNASNEHGYLLANAFVSVLDVPPRILAPRNQLIKVIQYNRTRLDCPFFGSPIPTLRWFKNGQGNMLDGGNYKAHENGSLEMSMARKEDQGIYTCVATNILGKVEAQVRLEVKDPTRIVRGPEDQVVKRGSMPRLHCRVKHDPTLKLTVTWLKDDAPLYIGNRMKKEDDGLTIYGVAEKDQGDYTCVASTELDKDSAKAYLTVLAIPANRLRDLPKERPDRPRDLELSDLAERSVKLTWIPGDDNNSPITDYIVQFEEDRFQPGTWHNHSRYPGNVNSALLSLSPYVNYQFRVIAVNDVGSSLPSMPSERYQTSGARPEINPTGVQGAGTQKNNMEITWTPLNATQAYGPNLRYIVRWRRRDPRGSWYNETVKAPRHVVWNTPIYVPYEIKVQAENDFGRAPEPETYIGYSGEDYPKAAPTDVRIRVLNSTAIALTWTRVHLDTIQGQLKEYRAYFWRDSSLLKNLWVSKKRQYVSFPGDRNRGIVSRLFPYSNYKLEMVVTNGRGDGPRSEVKEFPTPEGVPSSPRYLRIRQPNLESINLEWDHPEHPNGVLTGYNLRYQASCLSSPVNGSKTGRTLVENFSPNQTRFTVQRTDPISRYRFFLRARTQVGDGEVIVEESPALLNEATPTPASTWLPPPTTELTPAATIATTTTTATPTTETPPTEIPTTAIPTTTTTTTTTAASTVASTTTTAERAAAATTKQELATNGSSIWDIRAWANSNWANITWSHNYSAGTDFVVKYITSNKTEKSIPVKAQTPSSVQLANLTPGMVYKLWVFPIWSSPSEHSYITFTTSSAYTKNHVDIATQGWFIGLMCAIALLVLILLIVCFIKRSRGGKYPVRDNKDEHLNPEDKNVEDGSFDYRSLESDEDNKPLPNSQTSLDGTIKQQESDDSLVDYGEGGEGQFNEDGSFIGQYTVKKDKEETEGNESSEATSPVNAIYSLA.

The N-terminal stretch at 1-25 is a signal peptide; that stretch reads MVLHSHQLTYAGIAFALCLHHLISA. At 26–1235 the chain is on the extracellular side; that stretch reads IEVPLDSNIQ…NHVDIATQGW (1210 aa). Ig-like C2-type domains lie at 42 to 138 and 144 to 231; these read PTIT…LQVS and PKEK…NPYT. Disulfide bonds link Cys-64-Cys-119 and Cys-163-Cys-214. 3 N-linked (GlcNAc...) asparagine glycosylation sites follow: Asn-241, Asn-247, and Asn-323. Ig-like C2-type domains are found at residues 262-350, 355-442, 448-535, and 539-626; these read PSFM…ISVR, PYWL…AFVS, PRIL…VRLE, and PTRI…AYLT. Cystine bridges form between Cys-286-Cys-334 and Cys-376-Cys-426. N-linked (GlcNAc...) asparagine glycosylation is found at Asn-427, Asn-464, and Asn-501. 2 disulfides stabilise this stretch: Cys-470/Cys-519 and Cys-561/Cys-610. 4 consecutive Fibronectin type-III domains span residues 645–740, 745–838, 843–945, and 949–1057; these read RPRD…TSGA, NPTG…SGED, APTD…TPEG, and SPRY…TPAS. N-linked (GlcNAc...) asparagine glycosylation is present at Asn-692. The span at 730–739 shows a compositional bias: polar residues; sequence MPSERYQTSG. Residues 730–753 are disordered; that stretch reads MPSERYQTSGARPEINPTGVQGAG. Residues Asn-767, Asn-793, Asn-853, Asn-994, and Asn-1009 are each glycosylated (N-linked (GlcNAc...) asparagine). The segment at 1078-1097 is disordered; sequence TTATPTTETPPTEIPTTAIP. N-linked (GlcNAc...) asparagine glycans are attached at residues Asn-1133, Asn-1150, Asn-1156, and Asn-1171. The Fibronectin type-III 5 domain maps to 1133–1222; sequence NGSSIWDIRA…SYITFTTSSA (90 aa). Residues 1236 to 1256 traverse the membrane as a helical segment; it reads FIGLMCAIALLVLILLIVCFI. Residues 1257-1369 lie on the Cytoplasmic side of the membrane; that stretch reads KRSRGGKYPV…SPVNAIYSLA (113 aa). 2 stretches are compositionally biased toward basic and acidic residues: residues 1266–1282 and 1289–1298; these read VRDN…KNVE and RSLESDEDNK. A disordered region spans residues 1266–1369; that stretch reads VRDNKDEHLN…SPVNAIYSLA (104 aa). The segment covering 1300–1313 has biased composition (polar residues); that stretch reads LPNSQTSLDGTIKQ.

It belongs to the immunoglobulin superfamily. L1/neurofascin/NgCAM family. In terms of processing, N-glycosylated and O-glycosylated. Post-translationally, may be proteolytically cleaved at Arg-636.

It localises to the cell membrane. Functionally, cell adhesion, ankyrin-binding protein which may be involved in neurite extension, axonal guidance, synaptogenesis, myelination and neuron-glial cell interactions. The polypeptide is Neurofascin (NFASC) (Gallus gallus (Chicken)).